Reading from the N-terminus, the 109-residue chain is U4-lycotoxin-Ls1a (109 aa).

The N-terminal stretch at 1-22 is a signal peptide; it reads MKVLVLFSVLFLTLFSYSSTEA. A propeptide spanning residues 23-44 is cleaved from the precursor; it reads IDEFDSDAEEDMLSLMANEQVR. The tract at residues 45 to 88 is knottin domain; it reads AKACTPRLHDCSHDRHSCCRGELFKDVCYCFYPEGEDKTEVCSC. Cystine bridges form between Cys-48/Cys-63, Cys-55/Cys-72, Cys-62/Cys-88, and Cys-74/Cys-86. Residues 89–108 form a linear cationic cytotoxin domain region; sequence QQPKSHKYIEKVVDKAKTVV.

It belongs to the neurotoxin 19 (CSTX) family. 05 (U4-Lctx) subfamily. Expressed by the venom gland.

It localises to the secreted. Functionally, enhances the high-affinity desensitization of human P2RX3 purinoceptors. This is U4-lycotoxin-Ls1a from Lycosa singoriensis (Wolf spider).